The following is a 721-amino-acid chain: Polyribonucleotide nucleotidyltransferase (721 aa).

2 residues coordinate Mg(2+): D490 and D496. The KH domain occupies 557–623; that stretch reads PRIISIKINP…RIAGLTKEAK (67 aa). Residues 625–693 enclose the S1 motif domain; the sequence is GEEYEGTVVK…DRGKIDLIRP (69 aa). Positions 693-721 are disordered; the sequence is PELEGKIAPREPRAPRGGGDRGPRPPRRD.

It belongs to the polyribonucleotide nucleotidyltransferase family. It depends on Mg(2+) as a cofactor.

Its subcellular location is the cytoplasm. The catalysed reaction is RNA(n+1) + phosphate = RNA(n) + a ribonucleoside 5'-diphosphate. In terms of biological role, involved in mRNA degradation. Catalyzes the phosphorolysis of single-stranded polyribonucleotides processively in the 3'- to 5'-direction. This chain is Polyribonucleotide nucleotidyltransferase, found in Deinococcus deserti (strain DSM 17065 / CIP 109153 / LMG 22923 / VCD115).